The sequence spans 304 residues: Peroxisomal membrane protein 13 (304 aa).

Disordered regions lie at residues 1 to 78 (MASQ…WEQQ) and 258 to 304 (PRKM…VWGN). 2 stretches are compositionally biased toward polar residues: residues 19-44 (NTSG…SGTA) and 56-67 (RPNTAANMNSLS). Low complexity predominate over residues 262–279 (QQPPQGPNGLPLPHQPHG).

Belongs to the peroxin-13 family. As to quaternary structure, interacts with PEX14; forming the PEX13-PEX14 docking complex. Interacts (via N-terminus) with PEX7, but not with PEX5. Interacts with APEM9 (via N-terminus). Highly expressed in pollen. Detected in shoots, roots, stems, leaves, inflorescences and emasculated postils. Strongly expressed in both male and female gametophytes during fertilization.

Its subcellular location is the peroxisome membrane. In terms of biological role, component of the PEX13-PEX14 docking complex, a translocon channel that specifically mediates the import of peroxisomal cargo proteins bound to PEX5 receptor. The PEX13-PEX14 docking complex forms a large import pore which can be opened to a diameter of about 9 nm. Mechanistically, PEX5 receptor along with cargo proteins associates with the PEX14 subunit of the PEX13-PEX14 docking complex in the cytosol, leading to the insertion of the receptor into the organelle membrane with the concomitant translocation of the cargo into the peroxisome matrix. Essential for pollen-tube discharge that take place only in the presence of functional peroxisomes in either the male or the female gametophyte. The sequence is that of Peroxisomal membrane protein 13 from Arabidopsis thaliana (Mouse-ear cress).